A 230-amino-acid chain; its full sequence is Large ribosomal subunit protein uL1 (230 aa).

The protein belongs to the universal ribosomal protein uL1 family. Part of the 50S ribosomal subunit.

Its function is as follows. Binds directly to 23S rRNA. The L1 stalk is quite mobile in the ribosome, and is involved in E site tRNA release. Functionally, protein L1 is also a translational repressor protein, it controls the translation of the L11 operon by binding to its mRNA. In Bacillus cereus (strain G9842), this protein is Large ribosomal subunit protein uL1.